The primary structure comprises 363 residues: Mannose-1-phosphate guanyltransferase (363 aa).

Belongs to the transferase hexapeptide repeat family.

It is found in the cytoplasm. The enzyme catalyses alpha-D-mannose 1-phosphate + GTP + H(+) = GDP-alpha-D-mannose + diphosphate. It functions in the pathway nucleotide-sugar biosynthesis; GDP-alpha-D-mannose biosynthesis; GDP-alpha-D-mannose from alpha-D-mannose 1-phosphate (GTP route): step 1/1. Functionally, involved in cell wall synthesis where it is required for glycosylation. Involved in cell cycle progression through cell-size checkpoint. Required for the correct assembly of the septum. This Schizosaccharomyces pombe (strain 972 / ATCC 24843) (Fission yeast) protein is Mannose-1-phosphate guanyltransferase (mpg1).